A 266-amino-acid chain; its full sequence is Ribosomal RNA small subunit methyltransferase A (266 aa).

Residues Asn12, Leu14, Gly39, Glu61, Asp87, and Asn107 each coordinate S-adenosyl-L-methionine.

It belongs to the class I-like SAM-binding methyltransferase superfamily. rRNA adenine N(6)-methyltransferase family. RsmA subfamily.

It localises to the cytoplasm. It catalyses the reaction adenosine(1518)/adenosine(1519) in 16S rRNA + 4 S-adenosyl-L-methionine = N(6)-dimethyladenosine(1518)/N(6)-dimethyladenosine(1519) in 16S rRNA + 4 S-adenosyl-L-homocysteine + 4 H(+). In terms of biological role, specifically dimethylates two adjacent adenosines (A1518 and A1519) in the loop of a conserved hairpin near the 3'-end of 16S rRNA in the 30S particle. May play a critical role in biogenesis of 30S subunits. In Nitratidesulfovibrio vulgaris (strain DP4) (Desulfovibrio vulgaris), this protein is Ribosomal RNA small subunit methyltransferase A.